The sequence spans 177 residues: dCTP deaminase, dUMP-forming (177 aa).

DCTP is bound by residues 98–103 (RSSVGR), Asn110, 115–118 (DPGF), 123–125 (TLE), Gln144, 157–160 (YQGK), and Gln164. The active-site Proton donor/acceptor is Glu125.

This sequence belongs to the dCTP deaminase family. Homotrimer. Mg(2+) serves as cofactor.

It catalyses the reaction dCTP + 2 H2O = dUMP + NH4(+) + diphosphate. The protein operates within pyrimidine metabolism; dUMP biosynthesis; dUMP from dCTP: step 1/1. With respect to regulation, inhibited by dTTP. Its function is as follows. Bifunctional enzyme that catalyzes both the deamination of dCTP to dUTP and the hydrolysis of dUTP to dUMP without releasing the toxic dUTP intermediate. The chain is dCTP deaminase, dUMP-forming from Halalkalibacterium halodurans (strain ATCC BAA-125 / DSM 18197 / FERM 7344 / JCM 9153 / C-125) (Bacillus halodurans).